A 299-amino-acid chain; its full sequence is Oxygen-dependent coproporphyrinogen-III oxidase (299 aa).

Ser-92 lines the substrate pocket. The a divalent metal cation site is built by His-96 and His-106. The active-site Proton donor is His-106. 108–110 (NVR) contributes to the substrate binding site. The a divalent metal cation site is built by His-145 and His-175. Residues 240–275 (YVEFNLVWDRGTLFGLQTGGRTESILMSMPPLVRWE) are important for dimerization. 258 to 260 (GGR) lines the substrate pocket.

The protein belongs to the aerobic coproporphyrinogen-III oxidase family. As to quaternary structure, homodimer. Requires a divalent metal cation as cofactor.

The protein resides in the cytoplasm. The catalysed reaction is coproporphyrinogen III + O2 + 2 H(+) = protoporphyrinogen IX + 2 CO2 + 2 H2O. The protein operates within porphyrin-containing compound metabolism; protoporphyrin-IX biosynthesis; protoporphyrinogen-IX from coproporphyrinogen-III (O2 route): step 1/1. Its function is as follows. Involved in the heme biosynthesis. Catalyzes the aerobic oxidative decarboxylation of propionate groups of rings A and B of coproporphyrinogen-III to yield the vinyl groups in protoporphyrinogen-IX. The polypeptide is Oxygen-dependent coproporphyrinogen-III oxidase (Salmonella typhi).